A 250-amino-acid chain; its full sequence is tRNA (guanine-N(1)-)-methyltransferase (250 aa).

S-adenosyl-L-methionine-binding positions include Gly108 and 127–132 (LGDFVL).

This sequence belongs to the RNA methyltransferase TrmD family. In terms of assembly, homodimer.

Its subcellular location is the cytoplasm. The catalysed reaction is guanosine(37) in tRNA + S-adenosyl-L-methionine = N(1)-methylguanosine(37) in tRNA + S-adenosyl-L-homocysteine + H(+). In terms of biological role, specifically methylates guanosine-37 in various tRNAs. The polypeptide is tRNA (guanine-N(1)-)-methyltransferase (Streptococcus agalactiae serotype Ia (strain ATCC 27591 / A909 / CDC SS700)).